Reading from the N-terminus, the 763-residue chain is 5-methyltetrahydropteroyltriglutamate--homocysteine methyltransferase (763 aa).

5-methyltetrahydropteroyltri-L-glutamate-binding positions include 16-19 and lysine 117; that span reads RELK. L-homocysteine is bound by residues 438 to 440 and glutamate 491; that span reads IGS. L-methionine-binding positions include 438–440 and glutamate 491; that span reads IGS. 5-methyltetrahydropteroyltri-L-glutamate is bound by residues 522 to 523 and tryptophan 568; that span reads RC. Aspartate 606 contributes to the L-homocysteine binding site. Aspartate 606 lines the L-methionine pocket. Glutamate 612 is a binding site for 5-methyltetrahydropteroyltri-L-glutamate. Residues histidine 648, cysteine 650, and glutamate 672 each coordinate Zn(2+). Histidine 701 acts as the Proton donor in catalysis. Cysteine 733 serves as a coordination point for Zn(2+).

This sequence belongs to the vitamin-B12 independent methionine synthase family. Requires Zn(2+) as cofactor.

The enzyme catalyses 5-methyltetrahydropteroyltri-L-glutamate + L-homocysteine = tetrahydropteroyltri-L-glutamate + L-methionine. It functions in the pathway amino-acid biosynthesis; L-methionine biosynthesis via de novo pathway; L-methionine from L-homocysteine (MetE route): step 1/1. In terms of biological role, catalyzes the transfer of a methyl group from 5-methyltetrahydrofolate to homocysteine resulting in methionine formation. In Pseudomonas paraeruginosa (strain DSM 24068 / PA7) (Pseudomonas aeruginosa (strain PA7)), this protein is 5-methyltetrahydropteroyltriglutamate--homocysteine methyltransferase.